The primary structure comprises 703 residues: Epidermal growth factor receptor (703 aa).

The signal sequence occupies residues 1–30 (MGVRSPLSASGPRGAAVLVLLLLGVALCSA). Residues 31 to 654 (VEEKKVCQGT…GCPNGSKTPS (624 aa)) are Extracellular-facing. Cysteines 37 and 64 form a disulfide. N-linked (GlcNAc...) asparagine glycans are attached at residues Asn134, Asn190, and Asn200. Intrachain disulfides connect Cys164-Cys194, Cys197-Cys206, Cys201-Cys214, Cys222-Cys230, Cys226-Cys238, Cys239-Cys247, Cys243-Cys255, Cys258-Cys267, Cys271-Cys298, Cys302-Cys314, Cys318-Cys333, Cys336-Cys340, and Cys344-Cys369. N-linked (GlcNAc...) asparagine glycosylation is found at Asn359, Asn368, and Asn420. 11 disulfide bridges follow: Cys477–Cys506, Cys513–Cys522, Cys517–Cys530, Cys533–Cys542, Cys546–Cys562, Cys565–Cys581, Cys569–Cys589, Cys592–Cys601, Cys605–Cys627, Cys630–Cys638, and Cys634–Cys646. N-linked (GlcNAc...) asparagine glycans are attached at residues Asn573 and Asn578. 2 N-linked (GlcNAc...) asparagine glycosylation sites follow: Asn613 and Asn633. Residue Asn648 is glycosylated (N-linked (GlcNAc...) asparagine). The helical transmembrane segment at 655-667 (IAAGVVGGLLCLV) threads the bilayer. At 668-703 (VVGLGIGLYLRRRHIVRKRTLRRLLQERELVEPLTP) the chain is on the cytoplasmic side. Residues Thr687 and Thr702 each carry the phosphothreonine modification.

The protein belongs to the protein kinase superfamily. Tyr protein kinase family. EGF receptor subfamily. As to quaternary structure, binding of the ligand triggers homo- and/or heterodimerization of the receptor triggering its autophosphorylation. In terms of processing, phosphorylated. Autophosphorylates.

It is found in the cell membrane. The protein resides in the endoplasmic reticulum membrane. The protein localises to the golgi apparatus membrane. Its subcellular location is the nucleus membrane. It localises to the endosome. It is found in the endosome membrane. The protein resides in the nucleus. The enzyme catalyses L-tyrosyl-[protein] + ATP = O-phospho-L-tyrosyl-[protein] + ADP + H(+). With respect to regulation, endocytosis and inhibition of the activated EGFR by phosphatases constitute immediate regulatory mechanisms. Moreover, inducible feedback inhibitors may constitute alternative regulatory mechanisms for the EGFR signaling. Receptor tyrosine kinase binding ligands of the EGF family and activating several signaling cascades to convert extracellular cues into appropriate cellular responses. Known ligands include EGF and TGFA/TGF-alpha. Ligand binding triggers receptor homo- and/or heterodimerization and autophosphorylation on key cytoplasmic residues. The phosphorylated receptor recruits adapter proteins like GRB2 which in turn activates complex downstream signaling cascades. Activates at least 4 major downstream signaling cascades including the RAS-RAF-MEK-ERK, PI3 kinase-AKT, PLCgamma-PKC and STATs modules. May also activate the NF-kappa-B signaling cascade. This Gallus gallus (Chicken) protein is Epidermal growth factor receptor (EGFR).